The primary structure comprises 91 residues: uncharacterized protein (91 aa).

Positions 1–91 (MLTFWHWKWL…YQNILRENGI (91 aa)) constitute an Integrase catalytic domain.

This is an uncharacterized protein from Haemophilus influenzae (strain ATCC 51907 / DSM 11121 / KW20 / Rd).